Consider the following 179-residue polypeptide: Large ribosomal subunit protein uL5 (179 aa).

The protein belongs to the universal ribosomal protein uL5 family. Part of the 50S ribosomal subunit; part of the 5S rRNA/L5/L18/L25 subcomplex. Contacts the 5S rRNA and the P site tRNA. Forms a bridge to the 30S subunit in the 70S ribosome.

This is one of the proteins that bind and probably mediate the attachment of the 5S RNA into the large ribosomal subunit, where it forms part of the central protuberance. In the 70S ribosome it contacts protein S13 of the 30S subunit (bridge B1b), connecting the 2 subunits; this bridge is implicated in subunit movement. Contacts the P site tRNA; the 5S rRNA and some of its associated proteins might help stabilize positioning of ribosome-bound tRNAs. The chain is Large ribosomal subunit protein uL5 from Actinobacillus pleuropneumoniae serotype 5b (strain L20).